The sequence spans 208 residues: GTP cyclohydrolase 1 (208 aa).

Zn(2+) contacts are provided by C89, H92, and C163.

Belongs to the GTP cyclohydrolase I family. Homomer.

It catalyses the reaction GTP + H2O = 7,8-dihydroneopterin 3'-triphosphate + formate + H(+). Its pathway is cofactor biosynthesis; 7,8-dihydroneopterin triphosphate biosynthesis; 7,8-dihydroneopterin triphosphate from GTP: step 1/1. The sequence is that of GTP cyclohydrolase 1 from Saccharolobus islandicus (strain Y.N.15.51 / Yellowstone #2) (Sulfolobus islandicus).